The primary structure comprises 571 residues: RNA polymerase sigma factor SigA (571 aa).

A sigma-70 factor domain-2 region spans residues 321–391 (MVESNLRLVI…TRAIADQART (71 aa)). Positions 345–348 (DLIQ) match the Interaction with polymerase core subunit RpoC motif. The tract at residues 400–476 (ETINKVLRGA…DTAVESPAEA (77 aa)) is sigma-70 factor domain-3. The segment at 489–542 (VLKTLTDRERFVLIHRFGLLDGRPKTLEEVGSAFNVTRERIRQIEAKALRKMRH) is sigma-70 factor domain-4. Positions 515–534 (LEEVGSAFNVTRERIRQIEA) form a DNA-binding region, H-T-H motif.

It belongs to the sigma-70 factor family. RpoD/SigA subfamily. Interacts transiently with the RNA polymerase catalytic core.

It is found in the cytoplasm. Functionally, sigma factors are initiation factors that promote the attachment of RNA polymerase to specific initiation sites and are then released. This sigma factor is the primary sigma factor during exponential growth. The chain is RNA polymerase sigma factor SigA from Chlamydia muridarum (strain MoPn / Nigg).